The following is a 164-amino-acid chain: Cyclic pyranopterin monophosphate synthase (164 aa).

Substrate-binding positions include 75–77 (MCH) and 116–117 (ME). Asp131 is a catalytic residue.

Belongs to the MoaC family. In terms of assembly, homohexamer; trimer of dimers.

The catalysed reaction is (8S)-3',8-cyclo-7,8-dihydroguanosine 5'-triphosphate = cyclic pyranopterin phosphate + diphosphate. It participates in cofactor biosynthesis; molybdopterin biosynthesis. Catalyzes the conversion of (8S)-3',8-cyclo-7,8-dihydroguanosine 5'-triphosphate to cyclic pyranopterin monophosphate (cPMP). This is Cyclic pyranopterin monophosphate synthase from Staphylococcus aureus (strain MRSA252).